Here is a 215-residue protein sequence, read N- to C-terminus: tRNA (guanine-N(7)-)-methyltransferase (215 aa).

Aspartate 43, glutamate 68, asparagine 95, and aspartate 121 together coordinate S-adenosyl-L-methionine. The active site involves aspartate 121. Substrate contacts are provided by lysine 125 and aspartate 157.

It belongs to the class I-like SAM-binding methyltransferase superfamily. TrmB family.

The catalysed reaction is guanosine(46) in tRNA + S-adenosyl-L-methionine = N(7)-methylguanosine(46) in tRNA + S-adenosyl-L-homocysteine. Its pathway is tRNA modification; N(7)-methylguanine-tRNA biosynthesis. Its function is as follows. Catalyzes the formation of N(7)-methylguanine at position 46 (m7G46) in tRNA. The protein is tRNA (guanine-N(7)-)-methyltransferase of Trichormus variabilis (strain ATCC 29413 / PCC 7937) (Anabaena variabilis).